The chain runs to 305 residues: UPF0282 protein Pisl_0021 (305 aa).

It belongs to the UPF0282 family.

The sequence is that of UPF0282 protein Pisl_0021 from Pyrobaculum islandicum (strain DSM 4184 / JCM 9189 / GEO3).